Reading from the N-terminus, the 432-residue chain is Glutamyl-tRNA reductase (432 aa).

Substrate-binding positions include 49 to 52, Ser109, 114 to 116, and Gln120; these read TCNR and EGQ. Cys50 functions as the Nucleophile in the catalytic mechanism. An NADP(+)-binding site is contributed by 198–203; that stretch reads GAGRMS.

Belongs to the glutamyl-tRNA reductase family. Homodimer.

The catalysed reaction is (S)-4-amino-5-oxopentanoate + tRNA(Glu) + NADP(+) = L-glutamyl-tRNA(Glu) + NADPH + H(+). It participates in porphyrin-containing compound metabolism; protoporphyrin-IX biosynthesis; 5-aminolevulinate from L-glutamyl-tRNA(Glu): step 1/2. It functions in the pathway porphyrin-containing compound metabolism; chlorophyll biosynthesis. In terms of biological role, catalyzes the NADPH-dependent reduction of glutamyl-tRNA(Glu) to glutamate 1-semialdehyde (GSA). The polypeptide is Glutamyl-tRNA reductase (Synechococcus sp. (strain CC9605)).